Here is a 114-residue protein sequence, read N- to C-terminus: PDZK1-interacting protein 1 (114 aa).

The Extracellular segment spans residues 1–28 (MSAFGLLILGLLTAVPPASCRQGLGNLQ). Residues 29–51 (PWMQGLIAVAVFLVLVAIAFAVN) traverse the membrane as a helical segment. Residues 52-114 (HFWCQEEPEP…EEGKVRSTPM (63 aa)) lie on the Cytoplasmic side of the membrane. A Phosphoserine modification is found at S85. Residues 95 to 114 (HENAYENVPEEEGKVRSTPM) form a disordered region. Over residues 105 to 114 (EEGKVRSTPM) the composition is skewed to basic and acidic residues.

The protein belongs to the PDZK1-interacting protein 1/SMIM24 family. In terms of assembly, forms a heterodimer (via N-terminal transmembrane helix) with SLC5A2/SGLT2 (via TM13); this interaction enhances SLC5A2 transporter activity. Interacts with PDZK1.

The protein localises to the apical cell membrane. Its function is as follows. Auxiliary protein of electrogenic Na(+)-coupled sugar symporter SLC5A2/SGLT2 and SLC5A1/SGLT1. Essential for the transporter activity of SLC5A2/SGLT2 but not SLC5A1/SGLT1. The protein is PDZK1-interacting protein 1 of Pongo abelii (Sumatran orangutan).